The sequence spans 430 residues: CinA-like protein (430 aa).

Belongs to the CinA family.

The sequence is that of CinA-like protein from Prochlorococcus marinus (strain NATL1A).